The following is a 507-amino-acid chain: Archaeal-type glutamate synthase [NADPH] (507 aa).

2 consecutive 4Fe-4S ferredoxin-type domains span residues 10–39 (FVVE…YDEN) and 41–70 (NRVY…VRKN). The [4Fe-4S] cluster site is built by Cys-19, Cys-22, Cys-25, Cys-29, Cys-50, Cys-53, Cys-56, and Cys-60.

Belongs to the glutamate synthase family. It depends on FMN as a cofactor.

It catalyses the reaction 2 L-glutamate + NADP(+) = L-glutamine + 2-oxoglutarate + NADPH + H(+). The chain is Archaeal-type glutamate synthase [NADPH] from Thermotoga maritima (strain ATCC 43589 / DSM 3109 / JCM 10099 / NBRC 100826 / MSB8).